Reading from the N-terminus, the 313-residue chain is Ribosomal RNA small subunit methyltransferase H (313 aa).

S-adenosyl-L-methionine is bound by residues 35-37 (GGH), aspartate 55, phenylalanine 81, aspartate 103, and glutamine 110.

It belongs to the methyltransferase superfamily. RsmH family.

It localises to the cytoplasm. The catalysed reaction is cytidine(1402) in 16S rRNA + S-adenosyl-L-methionine = N(4)-methylcytidine(1402) in 16S rRNA + S-adenosyl-L-homocysteine + H(+). Its function is as follows. Specifically methylates the N4 position of cytidine in position 1402 (C1402) of 16S rRNA. The chain is Ribosomal RNA small subunit methyltransferase H from Azotobacter vinelandii (strain DJ / ATCC BAA-1303).